The following is a 32-amino-acid chain: Alpha-amylase inhibitor AAI (32 aa).

3 cysteine pairs are disulfide-bonded: C1/C18, C8/C23, and C17/C31.

In terms of tissue distribution, endosperm.

Functionally, alpha-amylase inhibitor. It is active against alpha-amylases from Tribolium castaneum and Prostephanus truncatus larvae. This Amaranthus hypochondriacus (Prince-of-Wales feather) protein is Alpha-amylase inhibitor AAI (AAI).